Reading from the N-terminus, the 333-residue chain is MLVGTPNLLTLDEADATWTLIKDKVIEEHFGPNAVAVPFLSDAACYDLLGVLVKQSRPAHTRLALPGRQGRRALKPVGPLPSLLEQAGSEGAFAHCTREYSPNGRAERAYEETRMLDGQPCKIRLHMGDLRKKVAFLLLPPGQVSLQQTLPWLRSTHSIYVIYQVFSCSWLQLGLTSTAREPQLLRLLRSLPVAFSCLKFSLQSKGVLGPQKPLTKDPLPHGANWVRPNLSIMPPLAPTSAPADTTEAADVPPPVPAPPTPPPQEGPEDKPTRFSYKGRNPFWRGPQILSENWLFSPRSPPPGAQGGGPRDPDGHSMSLPLLQGLSSEFDSDD.

The tract at residues 234–333 (PPLAPTSAPA…GLSSEFDSDD (100 aa)) is disordered. Residues 251–265 (VPPPVPAPPTPPPQE) are compositionally biased toward pro residues. Residues 324 to 333 (GLSSEFDSDD) show a composition bias toward polar residues.

It is found in the cell projection. Its subcellular location is the cilium. The protein localises to the flagellum. This is an uncharacterized protein from Homo sapiens (Human).